The chain runs to 179 residues: Shikimate kinase (179 aa).

15 to 20 serves as a coordination point for ATP; sequence GAGKTS. Thr-19 contributes to the Mg(2+) binding site. Substrate contacts are provided by Asp-37, Arg-61, and Gly-83. ATP is bound at residue Arg-122. Arg-142 contributes to the substrate binding site.

Belongs to the shikimate kinase family. As to quaternary structure, monomer. Mg(2+) serves as cofactor.

The protein localises to the cytoplasm. It carries out the reaction shikimate + ATP = 3-phosphoshikimate + ADP + H(+). It functions in the pathway metabolic intermediate biosynthesis; chorismate biosynthesis; chorismate from D-erythrose 4-phosphate and phosphoenolpyruvate: step 5/7. In terms of biological role, catalyzes the specific phosphorylation of the 3-hydroxyl group of shikimic acid using ATP as a cosubstrate. In Coxiella burnetii (strain Dugway 5J108-111), this protein is Shikimate kinase.